A 239-amino-acid polypeptide reads, in one-letter code: Enolase-phosphatase E1 (239 aa).

This sequence belongs to the HAD-like hydrolase superfamily. MasA/MtnC family. In terms of assembly, monomer. Requires Mg(2+) as cofactor.

The catalysed reaction is 5-methylsulfanyl-2,3-dioxopentyl phosphate + H2O = 1,2-dihydroxy-5-(methylsulfanyl)pent-1-en-3-one + phosphate. It participates in amino-acid biosynthesis; L-methionine biosynthesis via salvage pathway; L-methionine from S-methyl-5-thio-alpha-D-ribose 1-phosphate: step 3/6. Its pathway is amino-acid biosynthesis; L-methionine biosynthesis via salvage pathway; L-methionine from S-methyl-5-thio-alpha-D-ribose 1-phosphate: step 4/6. Bifunctional enzyme that catalyzes the enolization of 2,3-diketo-5-methylthiopentyl-1-phosphate (DK-MTP-1-P) into the intermediate 2-hydroxy-3-keto-5-methylthiopentenyl-1-phosphate (HK-MTPenyl-1-P), which is then dephosphorylated to form the acireductone 1,2-dihydroxy-3-keto-5-methylthiopentene (DHK-MTPene). The polypeptide is Enolase-phosphatase E1 (Streptomyces avermitilis (strain ATCC 31267 / DSM 46492 / JCM 5070 / NBRC 14893 / NCIMB 12804 / NRRL 8165 / MA-4680)).